We begin with the raw amino-acid sequence, 316 residues long: Ribosomal RNA large subunit methyltransferase F (316 aa).

The segment at 200-222 (EEANKSTSRKVSNLNPKEKKNTN) is disordered. Polar residues predominate over residues 204–214 (KSTSRKVSNLN).

The protein belongs to the methyltransferase superfamily. METTL16/RlmF family.

The protein localises to the cytoplasm. The enzyme catalyses adenosine(1618) in 23S rRNA + S-adenosyl-L-methionine = N(6)-methyladenosine(1618) in 23S rRNA + S-adenosyl-L-homocysteine + H(+). In terms of biological role, specifically methylates the adenine in position 1618 of 23S rRNA. This Flavobacterium johnsoniae (strain ATCC 17061 / DSM 2064 / JCM 8514 / BCRC 14874 / CCUG 350202 / NBRC 14942 / NCIMB 11054 / UW101) (Cytophaga johnsonae) protein is Ribosomal RNA large subunit methyltransferase F.